We begin with the raw amino-acid sequence, 626 residues long: tRNA uridine 5-carboxymethylaminomethyl modification enzyme MnmG (626 aa).

FAD is bound at residue 13–18 (GGGHAG). NAD(+) is bound at residue 273–287 (GPRYCPSIEDKIHRF).

Belongs to the MnmG family. Homodimer. Heterotetramer of two MnmE and two MnmG subunits. FAD is required as a cofactor.

The protein localises to the cytoplasm. In terms of biological role, NAD-binding protein involved in the addition of a carboxymethylaminomethyl (cmnm) group at the wobble position (U34) of certain tRNAs, forming tRNA-cmnm(5)s(2)U34. The chain is tRNA uridine 5-carboxymethylaminomethyl modification enzyme MnmG from Acinetobacter baumannii (strain SDF).